The following is a 663-amino-acid chain: Spore germination protein GerIA (663 aa).

A compositionally biased stretch (basic residues) spans methionine 1 to asparagine 13. The disordered stretch occupies residues methionine 1–threonine 175. The segment covering lysine 47–glutamine 56 has biased composition (basic and acidic residues). 3 stretches are compositionally biased toward low complexity: residues aspartate 57–glutamine 72, proline 88–alanine 101, and aspartate 122–glutamine 150. The next 5 helical transmembrane spans lie at isoleucine 414–isoleucine 434, isoleucine 451–leucine 471, alanine 491–leucine 511, alanine 541–isoleucine 561, and phenylalanine 578–phenylalanine 598.

This sequence belongs to the GerABKA family.

The protein resides in the cell membrane. Required for inosine germination. The polypeptide is Spore germination protein GerIA (gerIA) (Bacillus cereus).